We begin with the raw amino-acid sequence, 88 residues long: Molybdopterin synthase sulfur carrier subunit (88 aa).

G88 carries the post-translational modification 1-thioglycine; alternate. At G88 the chain carries Glycyl adenylate; alternate.

This sequence belongs to the MoaD family. MOCS2A subfamily. Heterotetramer; composed of 2 small (MOCS2A) and 2 large (MOCS2B) subunits. In terms of processing, C-terminal thiocarboxylation occurs in 2 steps, it is first acyl-adenylated (-COAMP) via the hesA/moeB/thiF part of uba4, then thiocarboxylated (-COSH) via the rhodanese domain of uba4.

Its subcellular location is the cytoplasm. It functions in the pathway cofactor biosynthesis; molybdopterin biosynthesis. Its function is as follows. Acts as a sulfur carrier required for molybdopterin biosynthesis. Component of the molybdopterin synthase complex that catalyzes the conversion of precursor Z into molybdopterin by mediating the incorporation of 2 sulfur atoms into precursor Z to generate a dithiolene group. In the complex, serves as sulfur donor by being thiocarboxylated (-COSH) at its C-terminus by uba4. After interaction with MOCS2B, the sulfur is then transferred to precursor Z to form molybdopterin. The sequence is that of Molybdopterin synthase sulfur carrier subunit from Aspergillus niger (strain ATCC MYA-4892 / CBS 513.88 / FGSC A1513).